Consider the following 88-residue polypeptide: Large ribosomal subunit protein eL20 (88 aa).

It belongs to the eukaryotic ribosomal protein eL20 family. As to quaternary structure, part of the 50S ribosomal subunit. Binds 23S rRNA.

This is Large ribosomal subunit protein eL20 from Aeropyrum pernix (strain ATCC 700893 / DSM 11879 / JCM 9820 / NBRC 100138 / K1).